The sequence spans 370 residues: Protein STRICTOSIDINE SYNTHASE-LIKE 9 (370 aa).

Positions 1–26 (MPINQKIPTWFAVPAVFAVLSVISYQ) are cleaved as a signal peptide. 2 N-linked (GlcNAc...) asparagine glycosylation sites follow: Asn-97 and Asn-171.

Belongs to the strictosidine synthase family.

Its subcellular location is the vacuole. This is Protein STRICTOSIDINE SYNTHASE-LIKE 9 from Arabidopsis thaliana (Mouse-ear cress).